A 912-amino-acid chain; its full sequence is Translation initiation factor IF-2 (912 aa).

The disordered stretch occupies residues 185 to 204 (NATRPKRKTKEEKQKEREER). Over residues 193 to 204 (TKEEKQKEREER) the composition is skewed to basic and acidic residues. In terms of domain architecture, tr-type G spans 411 to 581 (LRPPIVTIMG…LLEAELLDLK (171 aa)). The G1 stretch occupies residues 420–427 (GHVDHGKT). Residue 420–427 (GHVDHGKT) coordinates GTP. The G2 stretch occupies residues 445–449 (GITQH). The interval 467-470 (DTPG) is G3. GTP-binding positions include 467 to 471 (DTPGH) and 521 to 524 (NKID). A G4 region spans residues 521 to 524 (NKID). The G5 stretch occupies residues 557 to 559 (SAK).

The protein belongs to the TRAFAC class translation factor GTPase superfamily. Classic translation factor GTPase family. IF-2 subfamily.

The protein localises to the cytoplasm. Functionally, one of the essential components for the initiation of protein synthesis. Protects formylmethionyl-tRNA from spontaneous hydrolysis and promotes its binding to the 30S ribosomal subunits. Also involved in the hydrolysis of GTP during the formation of the 70S ribosomal complex. In Azobacteroides pseudotrichonymphae genomovar. CFP2, this protein is Translation initiation factor IF-2.